We begin with the raw amino-acid sequence, 466 residues long: Aladin (466 aa).

5 WD repeats span residues 135–174, 179–218, 229–269, 271–310, and 378–418; these read WLNS…TTAT, PSQT…HLGR, PNNL…MQPL, RLGP…TTER, and LVGG…FDLQ.

The protein localises to the nucleus. Its subcellular location is the nuclear pore complex. It is found in the cytoplasm. The protein resides in the cytoskeleton. It localises to the spindle. Its function is as follows. Involved in mitotic spindle assembly. This chain is Aladin, found in Drosophila melanogaster (Fruit fly).